A 141-amino-acid chain; its full sequence is Hemoglobin subunit alpha-D (141 aa).

In terms of domain architecture, Globin spans 1 to 141 (MLTAEDKKLI…VAAVLAEKYR (141 aa)). 2 residues coordinate heme b: H58 and H87.

It belongs to the globin family. As to quaternary structure, heterotetramer of two alpha-D chains and two beta chains. Red blood cells.

In terms of biological role, involved in oxygen transport from the lung to the various peripheral tissues. The sequence is that of Hemoglobin subunit alpha-D (HBAD) from Anas platyrhynchos (Mallard).